Reading from the N-terminus, the 797-residue chain is Striatin-3 (797 aa).

Residue Met-1 is modified to N-acetylmethionine. Composition is skewed to gly residues over residues 1–12 (MDELAGGGGGGP) and 33–43 (GGNGAAGGGGP). The segment at 1-60 (MDELAGGGGGGPAMASPPRQQQGPGGNMSLSPGGNGAAGGGGPPATEGAGPAAGPELSRP) is disordered. Residues 44 to 55 (PATEGAGPAAGP) show a composition bias toward low complexity. The interval 71-79 (YIQHEWARF) is caveolin-binding. The stretch at 77–136 (ARFEMERAHWEVERAELQARIAFLQGERKGQENLKKDLVRRIKMLEYALKQERAKYHKLK) forms a coiled coil. Thr-150 is subject to Phosphothreonine. Residues 166-183 (QNSQLTWKQGRQLLRQYL) form a calmodulin-binding region. 5 positions are modified to phosphoserine: Ser-202, Ser-214, Ser-229, Ser-257, and Ser-335. The interval 313–336 (DGEGAGEARSSGDGTEWDKDDLSP) is disordered. WD repeat units follow at residues 478 to 517 (SHFD…PAKK), 531 to 570 (AHIG…VDPY), 584 to 623 (AHTD…PCIC), 679 to 718 (QSSN…MIHS), 721 to 760 (AHLD…CVQE), and 767 to 796 (KLDE…AKVF).

It belongs to the WD repeat striatin family. As to quaternary structure, tetramerizes. Part of the core of STRIPAK complexes composed of PP2A catalytic and scaffolding subunits, the striatins (PP2A regulatory subunits), the striatin-associated proteins MOB4, STRIP1 and STRIP2, PDCD10 and members of the STE20 kinases, such as STK24 and STK26. The STRIPAK complex can be extended by adapter proteins such as SLMAP:SIKE1 or CTTNBP2NL. Interacts with CDC42BPB.

The protein resides in the cytoplasm. It localises to the membrane. Its function is as follows. Calmodulin-binding scaffolding protein which is the center of the striatin-interacting phosphatase and kinase (STRIPAK) complexes. STRIPAK complexes have critical roles in protein (de)phosphorylation and are regulators of multiple signaling pathways including Hippo, MAPK, nuclear receptor and cytoskeleton remodeling. Different types of STRIPAK complexes are involved in a variety of biological processes such as cell growth, differentiation, apoptosis, metabolism and immune regulation. This chain is Striatin-3 (STRN3), found in Bos taurus (Bovine).